Reading from the N-terminus, the 370-residue chain is tRNA-specific 2-thiouridylase MnmA (370 aa).

ATP contacts are provided by residues 25 to 32 and Leu51; that span reads ALSGGVDS. Catalysis depends on Cys112, which acts as the Nucleophile. Cysteines 112 and 211 form a disulfide. Gly137 is a binding site for ATP. Residues 161–163 are interaction with tRNA; it reads KDQ. Cys211 acts as the Cysteine persulfide intermediate in catalysis. The interval 316–317 is interaction with tRNA; the sequence is RY.

The protein belongs to the MnmA/TRMU family.

Its subcellular location is the cytoplasm. The enzyme catalyses S-sulfanyl-L-cysteinyl-[protein] + uridine(34) in tRNA + AH2 + ATP = 2-thiouridine(34) in tRNA + L-cysteinyl-[protein] + A + AMP + diphosphate + H(+). Catalyzes the 2-thiolation of uridine at the wobble position (U34) of tRNA, leading to the formation of s(2)U34. This is tRNA-specific 2-thiouridylase MnmA from Synechococcus sp. (strain JA-3-3Ab) (Cyanobacteria bacterium Yellowstone A-Prime).